A 610-amino-acid chain; its full sequence is Sulfite reductase [NADPH] flavoprotein alpha-component (610 aa).

The Flavodoxin-like domain occupies 68-206 (IIVISASQTG…EVDKWKEKVV (139 aa)). FMN is bound by residues 74–79 (SQTGNA), 121–124 (STHG), and 157–166 (LGDRSYEYFA). The FAD-binding FR-type domain maps to 243–459 (EFPLIAYLLN…VESNDNFRLP (217 aa)). FAD-binding positions include threonine 331, serine 365, 397–400 (RFYS), 415–417 (TVS), tyrosine 421, and 430–433 (GGAS). NADP(+) contacts are provided by residues 530–531 (SR), 536–540 (KVYVQ), and aspartate 572. Tyrosine 610 contributes to the FAD binding site.

Belongs to the NADPH-dependent sulphite reductase flavoprotein subunit CysJ family. This sequence in the N-terminal section; belongs to the flavodoxin family. The protein in the C-terminal section; belongs to the flavoprotein pyridine nucleotide cytochrome reductase family. As to quaternary structure, alpha(8)-beta(8). The alpha component is a flavoprotein, the beta component is a hemoprotein. The cofactor is FAD. FMN is required as a cofactor.

It carries out the reaction hydrogen sulfide + 3 NADP(+) + 3 H2O = sulfite + 3 NADPH + 4 H(+). Its pathway is sulfur metabolism; hydrogen sulfide biosynthesis; hydrogen sulfide from sulfite (NADPH route): step 1/1. Functionally, component of the sulfite reductase complex that catalyzes the 6-electron reduction of sulfite to sulfide. This is one of several activities required for the biosynthesis of L-cysteine from sulfate. The flavoprotein component catalyzes the electron flow from NADPH -&gt; FAD -&gt; FMN to the hemoprotein component. This is Sulfite reductase [NADPH] flavoprotein alpha-component from Blochmanniella floridana.